We begin with the raw amino-acid sequence, 226 residues long: Spermatogenesis-associated protein 25 (226 aa).

A helical transmembrane segment spans residues 153–173 (ICILTLAMMIAGIPTVPVPGL).

The protein belongs to the SPATA25 family. As to expression, expressed strongly in testis, weakly in epididymis and not detected in other tissues.

It is found in the membrane. May play a role in spermatogenesis. The polypeptide is Spermatogenesis-associated protein 25 (Spata25) (Mus musculus (Mouse)).